The following is a 248-amino-acid chain: Pyridoxine 5'-phosphate synthase (248 aa).

Asn-12 serves as a coordination point for 3-amino-2-oxopropyl phosphate. A 1-deoxy-D-xylulose 5-phosphate-binding site is contributed by 14 to 15 (DH). Position 23 (Arg-23) interacts with 3-amino-2-oxopropyl phosphate. The active-site Proton acceptor is His-48. 1-deoxy-D-xylulose 5-phosphate contacts are provided by Arg-50 and His-55. Glu-75 serves as the catalytic Proton acceptor. Thr-105 lines the 1-deoxy-D-xylulose 5-phosphate pocket. The active-site Proton donor is the His-196. 3-amino-2-oxopropyl phosphate contacts are provided by residues Gly-197 and 218–219 (GH).

The protein belongs to the PNP synthase family. In terms of assembly, homooctamer; tetramer of dimers.

The protein resides in the cytoplasm. It carries out the reaction 3-amino-2-oxopropyl phosphate + 1-deoxy-D-xylulose 5-phosphate = pyridoxine 5'-phosphate + phosphate + 2 H2O + H(+). It participates in cofactor biosynthesis; pyridoxine 5'-phosphate biosynthesis; pyridoxine 5'-phosphate from D-erythrose 4-phosphate: step 5/5. Its function is as follows. Catalyzes the complicated ring closure reaction between the two acyclic compounds 1-deoxy-D-xylulose-5-phosphate (DXP) and 3-amino-2-oxopropyl phosphate (1-amino-acetone-3-phosphate or AAP) to form pyridoxine 5'-phosphate (PNP) and inorganic phosphate. The polypeptide is Pyridoxine 5'-phosphate synthase (Pseudomonas fluorescens (strain ATCC BAA-477 / NRRL B-23932 / Pf-5)).